The chain runs to 166 residues: Cofilin-1 (166 aa).

Position 2 is an N-acetylalanine (Ala-2). Ser-3 carries the post-translational modification Phosphoserine; by NRK. The ADF-H domain occupies 4–153 (GVAVSDGVIK…KDRCTLAEKL (150 aa)). Ser-8 carries the post-translational modification Phosphoserine. Lys-13 is subject to N6-acetyllysine. Thr-25 is modified (phosphothreonine). The Nuclear localization signal motif lies at 30 to 34 (KKRKK). Ser-41 is modified (phosphoserine). Residue Thr-63 is modified to Phosphothreonine. The residue at position 68 (Tyr-68) is a Phosphotyrosine. The residue at position 73 (Lys-73) is an N6-acetyllysine. Tyr-82 carries the phosphotyrosine modification. Residue Ser-108 is modified to Phosphoserine. Lys-132 participates in a covalent cross-link: Glycyl lysine isopeptide (Lys-Gly) (interchain with G-Cter in SUMO2). Phosphotyrosine is present on Tyr-140. Lys-144 carries the post-translational modification N6-acetyllysine. The residue at position 156 (Ser-156) is a Phosphoserine.

Belongs to the actin-binding proteins ADF family. As to quaternary structure, can bind G- and F-actin in a 1:1 ratio of cofilin to actin. It is a major component of intranuclear and cytoplasmic actin rods. Interacts with the subcortical maternal complex (SCMC) via interaction with TLE6 isoform 1 and NLRP5. Interacts with C9orf72. In terms of assembly, (Microbial infection) Interacts with human respiratory syncytial virus (HRSV) matrix protein; this interaction probably facilitates viral replication. In terms of processing, inactivated by phosphorylation on Ser-3. Phosphorylated on Ser-3 in resting cells. Dephosphorylated by PDXP/chronophin; this restores its activity in promoting actin filament depolymerization. The phosphorylation of Ser-24 may prevent recognition of the nuclear localization signal. Phosphorylated via a ARRB1-RAC1-LIMK1-PAK1 cascade upon active ligand stimulation of atypical chemokine receptor ACKR2. As to expression, widely distributed in various tissues.

It localises to the nucleus matrix. Its subcellular location is the cytoplasm. It is found in the cytoskeleton. The protein resides in the cell projection. The protein localises to the ruffle membrane. It localises to the lamellipodium membrane. Its subcellular location is the lamellipodium. It is found in the growth cone. The protein resides in the axon. Binds to F-actin and exhibits pH-sensitive F-actin depolymerizing activity. In conjunction with the subcortical maternal complex (SCMC), plays an essential role for zygotes to progress beyond the first embryonic cell divisions via regulation of actin dynamics. Required for the centralization of the mitotic spindle and symmetric division of zygotes. Plays a role in the regulation of cell morphology and cytoskeletal organization in epithelial cells. Required for the up-regulation of atypical chemokine receptor ACKR2 from endosomal compartment to cell membrane, increasing its efficiency in chemokine uptake and degradation. Required for neural tube morphogenesis and neural crest cell migration. In Homo sapiens (Human), this protein is Cofilin-1 (CFL1).